The chain runs to 274 residues: Histone H1.1 (274 aa).

Disordered regions lie at residues 1 to 63 (MSEV…SSHP) and 129 to 155 (PSASAKASSPKAAAEKSAPAKKKPATV). At serine 2 the chain carries N-acetylserine. Residues 16 to 25 (TAADAPVTDA) are compositionally biased toward low complexity. Residues 40-49 (NVKEVKEKKT) are compositionally biased toward basic and acidic residues. The H15 domain maps to 61–130 (SHPTYEEMIK…KVKASFKLPS (70 aa)). The segment covering 129–145 (PSASAKASSPKAAAEKS) has biased composition (low complexity). A Glycyl lysine isopeptide (Lys-Gly) (interchain with G-Cter in ubiquitin) cross-link involves residue lysine 161. 2 disordered regions span residues 167 to 233 (ASKA…PAKK) and 249 to 274 (KTPVKKVVKPKTVKSPAKRASSRVKK). Composition is skewed to low complexity over residues 175–185 (AVKPKTAAAKK) and 221–233 (AAKTAKVTSPAKK).

This sequence belongs to the histone H1/H5 family.

The protein resides in the nucleus. Its subcellular location is the chromosome. In terms of biological role, histones H1 are necessary for the condensation of nucleosome chains into higher-order structures. The polypeptide is Histone H1.1 (Arabidopsis thaliana (Mouse-ear cress)).